A 478-amino-acid chain; its full sequence is PRAME family member 27 (478 aa).

The LRR 1 repeat unit spans residues 17-40; sequence RSLLRDQALAMSTLEELPTELFPP. The LRR 1; degenerate repeat unit spans residues 99–126; that stretch reads RWKLQVLDLQDVCENFWMVWSEAMARGS. The LRR 2; degenerate repeat unit spans residues 181–205; the sequence is HLCCKKLKILGMPFRNIRSILKMVN. One copy of the LRR 3; degenerate repeat lies at 206–232; it reads LDCIQEVEVNCKWVLPILTQFTPYLGH. One copy of the LRR 4; degenerate repeat lies at 233–268; sequence MRNLQKLVLSHMDVSRYVSPEQKKEIVTQFTTQFLK. LRR repeat units lie at residues 269-294, 295-326, 327-348, 351-378, and 379-403; these read LHCL…LSCL, KTSL…SQLK, TLDL…ILLE, AATL…ALSR, and CFEL…LLSH.

It belongs to the PRAME family.

The chain is PRAME family member 27 from Homo sapiens (Human).